A 455-amino-acid polypeptide reads, in one-letter code: Bifunctional protein GlmU (455 aa).

Residues 1–227 (MDSLSIVILA…SWEAAGVNNK (227 aa)) are pyrophosphorylase. Residues 9-12 (LAAG), lysine 23, glutamine 74, 79-80 (GT), 101-103 (YGD), glycine 137, glutamate 152, asparagine 167, and asparagine 225 each bind UDP-N-acetyl-alpha-D-glucosamine. Aspartate 103 is a binding site for Mg(2+). Asparagine 225 provides a ligand contact to Mg(2+). The interval 228-248 (VQLAELERILQANQARALLEA) is linker. An N-acetyltransferase region spans residues 249–455 (GVTLADPARI…GWKRPQKKSG (207 aa)). The UDP-N-acetyl-alpha-D-glucosamine site is built by arginine 331 and lysine 349. Histidine 361 acts as the Proton acceptor in catalysis. Positions 364 and 375 each coordinate UDP-N-acetyl-alpha-D-glucosamine. Residues alanine 378, 384 to 385 (NY), serine 403, alanine 421, and arginine 438 each bind acetyl-CoA.

The protein in the N-terminal section; belongs to the N-acetylglucosamine-1-phosphate uridyltransferase family. This sequence in the C-terminal section; belongs to the transferase hexapeptide repeat family. In terms of assembly, homotrimer. Mg(2+) serves as cofactor.

Its subcellular location is the cytoplasm. It catalyses the reaction alpha-D-glucosamine 1-phosphate + acetyl-CoA = N-acetyl-alpha-D-glucosamine 1-phosphate + CoA + H(+). It carries out the reaction N-acetyl-alpha-D-glucosamine 1-phosphate + UTP + H(+) = UDP-N-acetyl-alpha-D-glucosamine + diphosphate. The protein operates within nucleotide-sugar biosynthesis; UDP-N-acetyl-alpha-D-glucosamine biosynthesis; N-acetyl-alpha-D-glucosamine 1-phosphate from alpha-D-glucosamine 6-phosphate (route II): step 2/2. It functions in the pathway nucleotide-sugar biosynthesis; UDP-N-acetyl-alpha-D-glucosamine biosynthesis; UDP-N-acetyl-alpha-D-glucosamine from N-acetyl-alpha-D-glucosamine 1-phosphate: step 1/1. Its pathway is bacterial outer membrane biogenesis; LPS lipid A biosynthesis. In terms of biological role, catalyzes the last two sequential reactions in the de novo biosynthetic pathway for UDP-N-acetylglucosamine (UDP-GlcNAc). The C-terminal domain catalyzes the transfer of acetyl group from acetyl coenzyme A to glucosamine-1-phosphate (GlcN-1-P) to produce N-acetylglucosamine-1-phosphate (GlcNAc-1-P), which is converted into UDP-GlcNAc by the transfer of uridine 5-monophosphate (from uridine 5-triphosphate), a reaction catalyzed by the N-terminal domain. The protein is Bifunctional protein GlmU of Chromobacterium violaceum (strain ATCC 12472 / DSM 30191 / JCM 1249 / CCUG 213 / NBRC 12614 / NCIMB 9131 / NCTC 9757 / MK).